The sequence spans 184 residues: Large ribosomal subunit protein uL22 (184 aa).

The protein belongs to the universal ribosomal protein uL22 family. In terms of assembly, part of the 50S ribosomal subunit.

This protein binds specifically to 23S rRNA. It makes multiple contacts with different domains of the 23S rRNA in the assembled 50S subunit and ribosome. Functionally, the globular domain of the protein is located near the polypeptide exit tunnel on the outside of the subunit, while an extended beta-hairpin is found that lines the wall of the exit tunnel in the center of the 70S ribosome. The sequence is that of Large ribosomal subunit protein uL22 from Pyrobaculum calidifontis (strain DSM 21063 / JCM 11548 / VA1).